The following is a 286-amino-acid chain: MTGQAEAIRRVHPTVSPKQAAQMLQEDGVIILKSFLAPDVMQRFQAEVDEDVEKTSTGARMKAYKLVNDKTKHMADLIVRSEVFRSDILTHPLYHAIADELFRADYGDHWLNASAVLQLMPGAPAQQLHRDEEIFAASKFRSPTDPQLSLSCLVALTEFTEENGATRLIPGSHLWDSAHPAPSPDQTVPAIMQPGEAILFLGSLFHGGGENRTENVRRGLGMSLIPCQFTPYSSHMHVPRTIIETMTPLAQKLVGWRTVESHRQYPFWQGGDRRLEDVLGLASREA.

Residues His-129, Asp-131, and His-206 each coordinate Fe cation.

Belongs to the PhyH family. Homodimer. Fe cation serves as cofactor.

It participates in secondary metabolite biosynthesis; terpenoid biosynthesis. Its function is as follows. Dioxygenase; part of the gene cluster that mediates the biosynthesis of terretonin, a fungal meroterpenoid that acts as a mycotoxin. The first step of the pathway is the synthesis of 3,5-dimethylorsellinic acid (DMOA) by the polyketide synthase trt4. DMOA is then prenylated into farnesyl-DMOA by the polyprenyl transferase trt2. Methylation by the methyltransferase trt5 then leads to farnesyl-DMOA methyl ester which is further subject to epoxidation by the FAD-dependent monooxygenase trt8 to yield epoxyfarnesyl-DMOA methyl ester. Cyclization of epoxyfarnesyl-DMOA methyl ester by the terpene cyclase trt1 leads to a tetracycle intermediate which is in turn converted to preterretonin. Dehydrogenase trt9 comes next to transform preterretonin to preterrenoid. The FAD-dependent monooxygenase trt3 is then required for the C-hydroxylation at C16 of preterrenoid to yield terrenoid. The cytochrome P450 trt6 catalyzes three successive oxidations to transform terrenoid into an unstable intermediate, which then undergoes the D-ring expansion and unusual rearrangement of the methoxy group to afford the core skeleton of terretonin. Trt14 catalyzes the D-ring expansion of terretonin involving intramolecular methoxy rearrangement as well as the hydrolysis of the expanded D-ring and the methyl ester moiety. Finally, the nonheme iron-dependent dioxygenase trt7 accomplishes the last two oxidation reactions steps to complete the biosynthesis of terretonin. Terretonin C is produced via spontaneous decarboxylation of the terretonin precursor. Another shunt product of the terretonin biosynthesis is dihydrofarnesyl-DMOA, derived from epoxyfarnesyl-DMOA through hydrolysis of the epoxide. The protein is Dioxygenase trt7 of Aspergillus terreus (strain NIH 2624 / FGSC A1156).